The following is a 992-amino-acid chain: Disks large-associated protein 4 (992 aa).

Positions 1–20 are enriched in basic and acidic residues; sequence MKGLGDSRPRHLSDSLDPPH. 2 disordered regions span residues 1-31 and 157-225; these read MKGL…DRNP and MEGT…PASG. Positions 162–171 are enriched in gly residues; it reads GKVGGNGSKK. Positions 172-194 are enriched in basic and acidic residues; the sequence is GGLEDGKGRRAKSKERAKAGEPK. The segment covering 199-208 has biased composition (polar residues); sequence SNISGWWSSD. Residues Ser-206 and Ser-207 each carry the phosphoserine modification. The residue at position 290 (Arg-290) is an Omega-N-methylarginine. Residues 342 to 396 form a disordered region; sequence TTLLSPRDMDSTAEGPIPCRRMRSGSYIKAMGDEDSDESGGGSPKPSPKTAARRQ. Ser-377, Ser-380, Ser-384, Ser-388, Ser-405, Ser-415, and Ser-421 each carry phosphoserine. Disordered stretches follow at residues 527–751, 763–798, and 915–992; these read SVSL…GPRQ, SYGD…AQPG, and TPEK…QTRL. The segment covering 528-554 has biased composition (low complexity); the sequence is VSLQSLSPPPSTGSLSNSRTLPSSSCL. Residues 576-591 are compositionally biased toward polar residues; it reads VTVQSSTESAQDTYLD. Residues Ser-580, Ser-581, Ser-609, Ser-611, Ser-665, and Ser-744 each carry the phosphoserine modification. The segment covering 600–620 has biased composition (low complexity); the sequence is TSQSGLSNSSDSLDSSTRPPS. Thr-915 is modified (phosphothreonine). Composition is skewed to basic and acidic residues over residues 915–925 and 940–958; these read TPEKRKEEKKP and VSRD…EARK. Residues 969–978 are compositionally biased toward polar residues; the sequence is VRQNSATESA. Residue Ser-973 is modified to Phosphoserine.

This sequence belongs to the SAPAP family. In terms of assembly, interacts with DLG1 and DLG4/PSD-95.

The protein resides in the membrane. May play a role in the molecular organization of synapses and neuronal cell signaling. Could be an adapter protein linking ion channel to the subsynaptic cytoskeleton. May induce enrichment of PSD-95/SAP90 at the plasma membrane. The polypeptide is Disks large-associated protein 4 (Dlgap4) (Mus musculus (Mouse)).